Reading from the N-terminus, the 1414-residue chain is DNA-directed RNA polymerase subunit beta'' (1414 aa).

Zn(2+) is bound by residues C220, C293, C300, and C303.

The protein belongs to the RNA polymerase beta' chain family. RpoC2 subfamily. In terms of assembly, in plastids the minimal PEP RNA polymerase catalytic core is composed of four subunits: alpha, beta, beta', and beta''. When a (nuclear-encoded) sigma factor is associated with the core the holoenzyme is formed, which can initiate transcription. Requires Zn(2+) as cofactor.

Its subcellular location is the plastid. The protein localises to the chloroplast. It catalyses the reaction RNA(n) + a ribonucleoside 5'-triphosphate = RNA(n+1) + diphosphate. In terms of biological role, DNA-dependent RNA polymerase catalyzes the transcription of DNA into RNA using the four ribonucleoside triphosphates as substrates. This Angiopteris evecta (Mule's foot fern) protein is DNA-directed RNA polymerase subunit beta''.